Consider the following 372-residue polypeptide: F-box/kelch-repeat protein At5g48990 (372 aa).

The F-box domain maps to 14–60; that stretch reads SSPNPSLPEDLIVSILARVSRSYYTNLSVVSKTFRSILTSPELYKTR. A Kelch repeat occupies 176-222; the sequence is RTYFPGSSEKPDSLNCVEVYNTNTQTWNPVPPQKRKLKFGNMEGKIY.

In Arabidopsis thaliana (Mouse-ear cress), this protein is F-box/kelch-repeat protein At5g48990.